Reading from the N-terminus, the 154-residue chain is 8-oxo-dGTP diphosphatase (154 aa).

The Nudix hydrolase domain occupies 1–129 (MPQLATICYI…DHTFVEWLLE (129 aa)). 4 residues coordinate Mg(2+): G38, E53, E56, and E57. Positions 38 to 59 (GKLERGETPQECAVREILEETG) match the Nudix box motif.

This sequence belongs to the Nudix hydrolase family. In terms of assembly, homotrimer. Requires Mg(2+) as cofactor.

It carries out the reaction 8-oxo-dGTP + H2O = 8-oxo-dGMP + diphosphate + H(+). Involved in the DNA repair system to avoid A.T to G.C transversions. Degrades 8-oxo-dGTP to the monophosphate, but is also active on all of the nucleoside triphosphates. The protein is 8-oxo-dGTP diphosphatase (mutX) of Streptococcus pneumoniae (strain ATCC BAA-255 / R6).